The primary structure comprises 275 residues: NAC domain-containing protein 2 (275 aa).

The NAC domain maps to 10–162; it reads LPPGFRFHPT…DWVLCRIYKK (153 aa). Residues 107–168 mediate DNA binding; the sequence is VGIKKALVFY…IYKKKNLERA (62 aa).

In terms of tissue distribution, expressed in roots, stem, flowers, and leaves.

It localises to the nucleus. Functionally, transcription factor that binds DNA motifs 5'-CGT[AG](5N)NACG[ACT][AC][AT][ACG][ACT]-3' and 5'-CACG[ACT][AC][AT][AGT][CT]-3' in target genes promoters. Promotes leaf senescence (developmental, light-induced and ABA-induced senescence) and regulates fruit yield and sugar content, probably by establishing abscisic acid (ABA) homeostasis. Activates the expression of senescence and ABA associated genes including NCED1, ABCG40, CYP707A2, SAG113, SGR1 and PAO, by directly binding to their promoters. This Solanum lycopersicum (Tomato) protein is NAC domain-containing protein 2.